Consider the following 343-residue polypeptide: CMP-N-acetylneuraminate-beta-galactosamide-alpha-2,3-sialyltransferase 1 (343 aa).

Residues 1–11 (MAPMRKKSTLK) lie on the Cytoplasmic side of the membrane. Residues 12–27 (LLTLLVLFIFLTSFFL) traverse the membrane as a helical; Signal-anchor for type II membrane protein segment. A glycan (N-linked (GlcNAc...) asparagine) is linked at Asn-28. The Lumenal portion of the chain corresponds to 28–343 (NYSHTVVTTA…INKIRIFKGR (316 aa)). Intrachain disulfides connect Cys-62–Cys-67, Cys-64–Cys-142, and Cys-145–Cys-284. N-linked (GlcNAc...) asparagine glycosylation occurs at Asn-82. Residue Gln-108 participates in substrate binding. The N-linked (GlcNAc...) asparagine glycan is linked to Asn-117. Substrate-binding residues include Asn-150, Asn-173, Tyr-233, Tyr-269, Gly-273, Gly-293, His-302, and His-319. Residue Asn-326 is glycosylated (N-linked (GlcNAc...) asparagine).

Belongs to the glycosyltransferase 29 family. Post-translationally, the soluble form derives from the membrane form by proteolytic processing. As to expression, the long isoform is abundant in salivary gland, liver, lung, and colon mucosa. Both long and short forms are detected in submaxillary salivary glands.

It localises to the golgi apparatus. Its subcellular location is the golgi stack membrane. The protein localises to the trans-Golgi network membrane. It is found in the secreted. It carries out the reaction a beta-D-galactosyl-(1-&gt;3)-N-acetyl-alpha-D-galactosaminyl derivative + CMP-N-acetyl-beta-neuraminate = an N-acetyl-alpha-neuraminyl-(2-&gt;3)-beta-D-galactosyl-(1-&gt;3)-N-acetyl-alpha-D-galactosaminyl derivative + CMP + H(+). It catalyses the reaction a ganglioside GM1 (d18:1(4E)) + CMP-N-acetyl-beta-neuraminate = a ganglioside GD1a (d18:1(4E)) + CMP + H(+). The catalysed reaction is ganglioside GM1 (d18:1(4E)/18:0) + CMP-N-acetyl-beta-neuraminate = ganglioside GD1a (18:1(4E)/18:0) + CMP + H(+). The enzyme catalyses a ganglioside GA1 (d18:1(4E)) + CMP-N-acetyl-beta-neuraminate = a ganglioside GM1b (d18:1(4E)) + CMP + H(+). It carries out the reaction a ganglioside GD1b + CMP-N-acetyl-beta-neuraminate = a ganglioside GT1b + CMP + H(+). It catalyses the reaction a 3-O-[beta-D-galactosyl-(1-&gt;3)-N-acetyl-alpha-D-galactosaminyl]-L-threonyl-[protein] + CMP-N-acetyl-beta-neuraminate = a 3-O-[N-acetyl-alpha-neuraminyl-(2-&gt;3)-beta-D-galactosyl-(1-&gt;3)-N-acetyl-alpha-D-galactosaminyl]-L-threonyl-[protein] + CMP + H(+). The catalysed reaction is a 3-O-[beta-D-galactosyl-(1-&gt;3)-N-acetyl-alpha-D-galactosaminyl]-L-seryl-[protein] + CMP-N-acetyl-beta-neuraminate = 3-O-[N-acetyl-alpha-neuraminyl-(2-&gt;3)-beta-D-galactosyl-(1-&gt;3)-N-acetyl-alpha-D-galactosaminyl]-L-seryl-[protein] + CMP + H(+). It functions in the pathway protein modification; protein glycosylation. Its pathway is glycolipid biosynthesis. Its function is as follows. A beta-galactoside alpha2-&gt;3 sialyltransferase involved in terminal sialylation of glycoproteins and glycolipids. Catalyzes the transfer of sialic acid (N-acetyl-neuraminic acid; Neu5Ac) from the nucleotide sugar donor CMP-Neu5Ac onto acceptor Galbeta-(1-&gt;3)-GalNAc-terminated glycoconjugates through an alpha2-3 linkage. Adds sialic acid to the core 1 O-glycan, Galbeta-(1-&gt;3)-GalNAc-O-Ser/Thr, which is a major structure of mucin-type O-glycans. As part of a homeostatic mechanism that regulates CD8-positive T cell numbers, sialylates core 1 O-glycans of T cell glycoproteins, SPN/CD43 and PTPRC/CD45. Prevents premature apoptosis of thymic CD8-positive T cells prior to peripheral emigration, whereas in the secondary lymphoid organs controls the survival of CD8-positive memory T cells generated following a successful immune response. Transfers sialic acid to asialofetuin, presumably onto Galbeta-(1-&gt;3)-GalNAc-O-Ser. Sialylates GM1a, GA1 and GD1b gangliosides to form GD1a, GM1b and GT1b, respectively. In Sus scrofa (Pig), this protein is CMP-N-acetylneuraminate-beta-galactosamide-alpha-2,3-sialyltransferase 1 (ST3GAL1).